Reading from the N-terminus, the 460-residue chain is MQKLLSVIPSVDKLIKQLAGIALIQQYGHQAFVAQARQVIDSLRQHILTHQSLPVDQPADNLLSLIATNLQQTQQIAMKKVFNLTGTILHTNLGRAIWSEAAITAASDAMRHHSALEFDIEAGKRSHRDNTISQLLCEITGAEAACVVNNNAAAVLLMLATFAKGKEVIVSRGELVEIGGAFRIPDIMQQAGCKLVEVGTTNRTHLKDYRAAINENTALLMKVHTSNYQIQGFTHSVSEQQLVELGQEVGLPVMSDLGSGSLIDMATFGLPAEPLVQQKVASGVALVTFSADKLLGGPQAGIIVGKKADIEALQAHPLKRVLRCDKVILAGLEATLRHYLLPDQLTTHLPTLSLLTQSIDHLRVKATRLQNSLSKRLDARYHLQIEQSLAQIGSGALPTERLASLAVTITAPTQRDLLQLEQQFKMLKYPIIGRFAEQKLWLDLRSVAQFDQLIEMLEEK.

An N6-(pyridoxal phosphate)lysine modification is found at Lys293.

It belongs to the SelA family. Pyridoxal 5'-phosphate serves as cofactor.

It is found in the cytoplasm. The catalysed reaction is L-seryl-tRNA(Sec) + selenophosphate + H(+) = L-selenocysteinyl-tRNA(Sec) + phosphate. Its pathway is aminoacyl-tRNA biosynthesis; selenocysteinyl-tRNA(Sec) biosynthesis; selenocysteinyl-tRNA(Sec) from L-seryl-tRNA(Sec) (bacterial route): step 1/1. In terms of biological role, converts seryl-tRNA(Sec) to selenocysteinyl-tRNA(Sec) required for selenoprotein biosynthesis. This chain is L-seryl-tRNA(Sec) selenium transferase, found in Haemophilus ducreyi (strain 35000HP / ATCC 700724).